A 559-amino-acid polypeptide reads, in one-letter code: Formate--tetrahydrofolate ligase (559 aa).

68–75 is a binding site for ATP; the sequence is TPAGEGKS.

This sequence belongs to the formate--tetrahydrofolate ligase family.

The catalysed reaction is (6S)-5,6,7,8-tetrahydrofolate + formate + ATP = (6R)-10-formyltetrahydrofolate + ADP + phosphate. It participates in one-carbon metabolism; tetrahydrofolate interconversion. The protein is Formate--tetrahydrofolate ligase of Lactobacillus gasseri (strain ATCC 33323 / DSM 20243 / BCRC 14619 / CIP 102991 / JCM 1131 / KCTC 3163 / NCIMB 11718 / NCTC 13722 / AM63).